Consider the following 200-residue polypeptide: TATA-box-binding protein 2 (200 aa).

2 repeat units span residues 25–101 (LQNI…ARIV) and 115–192 (IQNI…YPVL).

This sequence belongs to the TBP family. As to quaternary structure, belongs to the TFIID complex together with the TBP-associated factors (TAFs). Binds DNA as monomer. Interacts with TAF1 (via N-terminus). Interacts with TFIIB1. Interacts with PTF2. Interacts with HAT5/ATHB-1 and ATHB-7. Component of a nuclear protein complex containing at least TATA binding proteins (TBPs, e.g. TBP1 and TBP2) and ATX1.

Its subcellular location is the nucleus. In terms of biological role, general transcription factor (GTF) that functions at the core of the DNA-binding multiprotein factor TFIID. Binding of TFIID to the TATA box is the initial transcriptional step of the pre-initiation complex (PIC), playing a role in the activation of eukaryotic genes transcribed by RNA polymerase II. Interacts with TFIIB1 and is required for activated transcription and possibly basal transcription. May act as GTF of RNA polymerase I-dependent transcription and rRNA synthesis. Forms a ternary complex with PBRP1 and the rDNA promoter region. The protein is TATA-box-binding protein 2 of Arabidopsis thaliana (Mouse-ear cress).